We begin with the raw amino-acid sequence, 193 residues long: MTEYLLLFVGTVLVNNFVLVKFLGLCPFMGVSKKLETAIGMGLATTFVLTLASVCAWMVNSFILLPLGLVYLRTLAFILVIAVVVQFTELVVRKTSPALYRLLGIFLPLITTNCAVLGVALLNINQSHNFMQSAVYGFSAAAGFSLVMVLFAAIRERLAVADVPAPFRGSSIALITAGLMSLAFMGFTGLVKF.

6 helical membrane passes run 5–25 (LLLF…FLGL), 39–59 (IGMG…AWMV), 62–82 (FILL…LVIA), 102–122 (LLGI…VALL), 134–154 (AVYG…FAAI), and 171–191 (SIAL…TGLV).

Belongs to the NqrDE/RnfAE family. As to quaternary structure, the complex is composed of six subunits: RnfA, RnfB, RnfC, RnfD, RnfE and RnfG.

The protein localises to the cell inner membrane. Functionally, part of a membrane-bound complex that couples electron transfer with translocation of ions across the membrane. The chain is Ion-translocating oxidoreductase complex subunit A from Yersinia enterocolitica serotype O:8 / biotype 1B (strain NCTC 13174 / 8081).